Consider the following 296-residue polypeptide: uncharacterized protein (296 aa).

Transmembrane regions (helical) follow at residues leucine 8–proline 28, leucine 34–isoleucine 54, tryptophan 63–phenylalanine 83, threonine 89–leucine 109, serine 121–serine 141, valine 147–serine 167, valine 183–isoleucine 203, glycine 208–alanine 228, alanine 238–isoleucine 258, and methionine 261–serine 281. EamA domains are found at residues phenylalanine 15–serine 138 and alanine 158–alanine 282.

It belongs to the EamA transporter family.

The protein resides in the cell membrane. This is an uncharacterized protein from Bacillus subtilis (strain 168).